The following is a 175-amino-acid chain: Cytochrome c homolog (175 aa).

Residues 1-8 (MTGKELNK) lie on the Cytoplasmic side of the membrane. Residues 9–29 (IVAAILFASLIAMIVGFIANI) traverse the membrane as a helical; Signal-anchor segment. The Periplasmic segment spans residues 30 to 175 (LYKPNLHVLH…LFLKNYVHDQ (146 aa)). Heme c contacts are provided by Cys84, Cys87, His88, and Met150.

It belongs to the cytochrome c family. Binds 1 heme c group covalently per subunit.

The protein resides in the cell membrane. Its function is as follows. May be involved in electron transfer from bc1 complex to aa3. The protein is Cytochrome c homolog (cycM) of Rickettsia prowazekii (strain Madrid E).